We begin with the raw amino-acid sequence, 83 residues long: Keratin-associated protein 6-1 (83 aa).

An RPT 1-1 repeat occupies 9–15; the sequence is YGGLGCG. An RPT 1-2 repeat occupies 19–25; sequence YGGLGCG. The stretch at 44 to 55 is one RPT 2-1 repeat; the sequence is GYGYGSRSLCGS. The RPT 2-2 repeat unit spans residues 56–67; sequence GYGYGSRSLCGS.

The protein belongs to the KRTAP type 6 family. Interacts with wool keratins.

Its function is as follows. In the wool cortex, wool keratin intermediate filaments are embedded in an interfilamentous matrix, consisting of hair keratin-associated proteins (KRTAP), which are essential for the formation of a rigid and resistant wool shaft through their extensive disulfide bond cross-linking with abundant cysteine residues of wool keratins. The matrix proteins include the high-sulfur and high-glycine-tyrosine keratins. The protein is Keratin-associated protein 6-1 (KRTAP6-1) of Ovis aries (Sheep).